A 540-amino-acid chain; its full sequence is 2-isopropylmalate synthase (540 aa).

Positions 8 to 269 (VLIFDTTLRD…YFNPFFGRAE (262 aa)) constitute a Pyruvate carboxyltransferase domain. Mn(2+) is bound by residues Asp17, His208, His210, and Asn244. The interval 408–540 (QLKLVQVSCG…ATPLDASPTL (133 aa)) is regulatory domain.

Belongs to the alpha-IPM synthase/homocitrate synthase family. LeuA type 1 subfamily. In terms of assembly, homodimer. Requires Mn(2+) as cofactor.

The protein localises to the cytoplasm. The catalysed reaction is 3-methyl-2-oxobutanoate + acetyl-CoA + H2O = (2S)-2-isopropylmalate + CoA + H(+). It functions in the pathway amino-acid biosynthesis; L-leucine biosynthesis; L-leucine from 3-methyl-2-oxobutanoate: step 1/4. Catalyzes the condensation of the acetyl group of acetyl-CoA with 3-methyl-2-oxobutanoate (2-ketoisovalerate) to form 3-carboxy-3-hydroxy-4-methylpentanoate (2-isopropylmalate). The protein is 2-isopropylmalate synthase of Synechococcus sp. (strain WH7803).